A 180-amino-acid polypeptide reads, in one-letter code: Beta-lactoglobulin (180 aa).

The N-terminal stretch at 1–18 is a signal peptide; the sequence is MKCLLLALGLALACGIQA. 3 disulfide bridges follow: Cys-84–Cys-178, Cys-124–Cys-137, and Cys-124–Cys-139.

Belongs to the calycin superfamily. Lipocalin family. As to quaternary structure, under physiological conditions beta-lactoglobulin exists as an equilibrium mixture of monomeric and dimeric forms. Interaction with LMBR1L is controversial. Post-translationally, alternate disulfide bonds occur in equal amounts. As to expression, synthesized in mammary gland and secreted in milk.

The protein localises to the secreted. Functionally, primary component of whey, it binds retinol and is probably involved in the transport of that molecule. The protein is Beta-lactoglobulin (LGB) of Capra hircus (Goat).